A 222-amino-acid chain; its full sequence is Collectrin (222 aa).

The N-terminal stretch at 1 to 14 is a signal peptide; sequence MLWALFFLVTTIHA. Residues 15–141 are Extracellular-facing; sequence ELCHPDAENA…LAPPMEPSVP (127 aa). The region spanning 21 to 222 is the Collectrin-like domain; sequence AENAFKVRLS…LTEDERLTPL (202 aa). N76 and N93 each carry an N-linked (GlcNAc...) asparagine glycan. A helical transmembrane segment spans residues 142–162; that stretch reads VWIIVFGVIFCIVTVAIALLV. Over 163-222 the chain is Cytoplasmic; the sequence is LSGIRQRRRNNKGPPGVEDAEDKCENIITIENGIPCDPLDMKGGHINDGFLTEDERLTPL. Phosphothreonine occurs at positions 214 and 220.

It belongs to the CLTRN family. As to quaternary structure, monomer. Homodimer. Homodimer; dimerization prevents CLTRN cleavage by BACE2. Interacts with SNAPIN. Interacts with SLC6A18; this interaction regulates the trafficking of SLC6A18 to the cell membrane and its amino acid transporter activity. Interacts with SLC6A19; this interaction regulates the trafficking of SLC6A19 to the cell membrane and its amino acid transporter activity. Interacts with SLC6A20B. In terms of processing, glycosylated. Glycosylation is required for plasma membrane localization and for its cleavage by BACE2. Proteolytically processed in pancreatic beta cells by BACE2 leading to the generation and extracellular release of soluble CLTRN, and a corresponding cell-associated C-terminal fragment which is later cleaved by gamma-secretase. This shedding process inactivates CLTRN. Three cleavage sites have been identified for BACE2, two clustered sites after Phe-116 and Leu-118 and a more membrane proximal site at Phe-125; the preferred BACE2 cleavage site seems to be between Phe-125 and Leu-126, Phe-116 and Leu-118 act as alternative sites. In terms of tissue distribution, expressed on the apical surface of the proximal tubules in the renal cortex (at protein level). Kidney; collecting ducts and proximal tubule. Pancreas; beta cells of islets. Expressed in the cerebral cortex, hippocampus, brainstem and cerebellum.

The protein localises to the cell membrane. Functionally, plays an important role in amino acid transport by acting as binding partner of amino acid transporters SLC6A18 and SLC6A19, regulating their trafficking on the cell surface and their activity. May also play a role in trafficking of amino acid transporters SLC3A1 and SLC7A9 to the renal cortical cell membrane. Regulator of SNARE complex function. Stimulator of beta cell replication. The protein is Collectrin of Mus musculus (Mouse).